A 352-amino-acid polypeptide reads, in one-letter code: Organic solute transporter subunit alpha (352 aa).

The Extracellular portion of the chain corresponds to 1–45 (MDVAHPEEVTRFSPDILMEKFNVSEACFLPPPISIQLILQLTWLD). N-linked (GlcNAc...) asparagine glycosylation is present at Asn22. The chain crosses the membrane as a helical span at residues 46–66 (IGVFAALTAMTVLTIAIYLEI). The Cytoplasmic portion of the chain corresponds to 67-82 (VCYLMDKVKCPIKRKT). Residues 83-103 (LMWNSAAPTVIAITSCLGLWV) traverse the membrane as a helical segment. Residues 104 to 108 (PRAIM) lie on the Extracellular side of the membrane. The chain crosses the membrane as a helical span at residues 109-129 (FVDMAAAMYFGVGFYLMLLII). Topologically, residues 130–173 (VQGYGGEEAMLQHLATHTIRISTGPCCCCCPCLPHIHLTRQKYK) are cytoplasmic. The chain crosses the membrane as a helical span at residues 174–194 (IFVLGAFQVAFLRPALFLLGV). At 195–210 (VLWTNGLYDPDDWSST) the chain is on the extracellular side. The chain crosses the membrane as a helical span at residues 211-231 (SIFLWLNLFLGVSTILGLWPV). The Cytoplasmic portion of the chain corresponds to 232–250 (NVLFRHSKVLMADQKLTCK). Residues 251 to 271 (FALFQAILILSSLQNSIIGTL) form a helical membrane-spanning segment. Residues 272-294 (AGAGHIGCAPPYSARTRGQQMNN) lie on the Extracellular side of the membrane. Residues 295 to 312 (QLLIIEMFFVGILTRISY) traverse the membrane as a helical segment. The Cytoplasmic segment spans residues 313–352 (RKRDDRPGHRHVGEVQQIVRECDQPAIADQQADHSSISHI).

This sequence belongs to the OST-alpha family. Interacts with slc51b. The Ost-alpha/Ost-beta complex is a heterodimer composed of alpha (slc51a) and beta (slc51b) subunit. Expressed in liver.

The protein resides in the cell membrane. The protein localises to the endoplasmic reticulum membrane. It catalyses the reaction taurocholate(out) = taurocholate(in). It carries out the reaction prostaglandin E2(out) = prostaglandin E2(in). The enzyme catalyses estrone 3-sulfate(out) = estrone 3-sulfate(in). The catalysed reaction is dehydroepiandrosterone 3-sulfate(out) = dehydroepiandrosterone 3-sulfate(in). It catalyses the reaction tauroursodeoxycholate(out) = tauroursodeoxycholate(in). It carries out the reaction glycoursodeoxycholate(out) = glycoursodeoxycholate(in). The enzyme catalyses glycocholate(out) = glycocholate(in). The catalysed reaction is taurochenodeoxycholate(out) = taurochenodeoxycholate(in). It catalyses the reaction glycochenodeoxycholate(out) = glycochenodeoxycholate(in). It carries out the reaction taurodeoxycholate(out) = taurodeoxycholate(in). The enzyme catalyses glycodeoxycholate(out) = glycodeoxycholate(in). Its function is as follows. Essential component of the Ost-alpha/Ost-beta complex, a heterodimer that acts as the intestinal basolateral transporter responsible for the translocation of bile acids (such as taurocholate), steroids (such as estrone sulfate), and eicosanoids (such as prostaglandin E2). The chain is Organic solute transporter subunit alpha (slc51a) from Leucoraja erinaceus (Little skate).